The primary structure comprises 174 residues: Cytochrome c-type biogenesis protein CcmE (174 aa).

The Cytoplasmic segment spans residues 1-8 (MNPRRKSR). A helical; Signal-anchor for type II membrane protein transmembrane segment spans residues 9–29 (LSVVLFIFLGISVASALVLYA). Over 30–174 (LRQNIDLFYT…QEKQFKEGNQ (145 aa)) the chain is Periplasmic. Residues His131 and Tyr135 each coordinate heme. The interval 149–174 (KPMGISDLKNESDRDRQEKQFKEGNQ) is disordered. Residues 156–174 (LKNESDRDRQEKQFKEGNQ) are compositionally biased toward basic and acidic residues.

Belongs to the CcmE/CycJ family.

It localises to the cell inner membrane. Heme chaperone required for the biogenesis of c-type cytochromes. Transiently binds heme delivered by CcmC and transfers the heme to apo-cytochromes in a process facilitated by CcmF and CcmH. This Histophilus somni (strain 129Pt) (Haemophilus somnus) protein is Cytochrome c-type biogenesis protein CcmE.